A 378-amino-acid polypeptide reads, in one-letter code: Chaperone protein DnaJ (378 aa).

In terms of domain architecture, J spans 5-70 (DYYESLGVAK…QKRAAYDQYG (66 aa)). The segment at 133–211 (GVTKEIRIPA…CHGHGRVEKS (79 aa)) adopts a CR-type zinc-finger fold. Positions 146, 149, 163, 166, 185, 188, 199, and 202 each coordinate Zn(2+). CXXCXGXG motif repeat units lie at residues 146–153 (CDVCHGNG), 163–170 (CPTCHGNG), 185–192 (CPHCHGRG), and 199–206 (CVKCHGHG).

Belongs to the DnaJ family. In terms of assembly, homodimer. Zn(2+) serves as cofactor.

The protein resides in the cytoplasm. Functionally, participates actively in the response to hyperosmotic and heat shock by preventing the aggregation of stress-denatured proteins and by disaggregating proteins, also in an autonomous, DnaK-independent fashion. Unfolded proteins bind initially to DnaJ; upon interaction with the DnaJ-bound protein, DnaK hydrolyzes its bound ATP, resulting in the formation of a stable complex. GrpE releases ADP from DnaK; ATP binding to DnaK triggers the release of the substrate protein, thus completing the reaction cycle. Several rounds of ATP-dependent interactions between DnaJ, DnaK and GrpE are required for fully efficient folding. Also involved, together with DnaK and GrpE, in the DNA replication of plasmids through activation of initiation proteins. The protein is Chaperone protein DnaJ of Pectobacterium carotovorum subsp. carotovorum (strain PC1).